The sequence spans 232 residues: Ubiquinone biosynthesis O-methyltransferase (232 aa).

S-adenosyl-L-methionine is bound by residues Arg-36, Gly-55, Asp-76, and Leu-120.

It belongs to the methyltransferase superfamily. UbiG/COQ3 family.

The enzyme catalyses a 3-demethylubiquinol + S-adenosyl-L-methionine = a ubiquinol + S-adenosyl-L-homocysteine + H(+). The catalysed reaction is a 3-(all-trans-polyprenyl)benzene-1,2-diol + S-adenosyl-L-methionine = a 2-methoxy-6-(all-trans-polyprenyl)phenol + S-adenosyl-L-homocysteine + H(+). It functions in the pathway cofactor biosynthesis; ubiquinone biosynthesis. In terms of biological role, O-methyltransferase that catalyzes the 2 O-methylation steps in the ubiquinone biosynthetic pathway. The protein is Ubiquinone biosynthesis O-methyltransferase of Pseudomonas fluorescens (strain SBW25).